We begin with the raw amino-acid sequence, 476 residues long: Glutamate--tRNA ligase 1 (476 aa).

Positions Pro-9–Gly-19 match the 'HIGH' region motif. The 'KMSKS' region signature appears at Lys-238–Arg-242. Lys-241 contributes to the ATP binding site.

It belongs to the class-I aminoacyl-tRNA synthetase family. Glutamate--tRNA ligase type 1 subfamily. Monomer.

It localises to the cytoplasm. It carries out the reaction tRNA(Glu) + L-glutamate + ATP = L-glutamyl-tRNA(Glu) + AMP + diphosphate. In terms of biological role, catalyzes the attachment of glutamate to tRNA(Glu) in a two-step reaction: glutamate is first activated by ATP to form Glu-AMP and then transferred to the acceptor end of tRNA(Glu). This is Glutamate--tRNA ligase 1 from Bartonella tribocorum (strain CIP 105476 / IBS 506).